The primary structure comprises 251 residues: Elongation factor Ts (251 aa).

The tract at residues 82 to 85 is involved in Mg(2+) ion dislocation from EF-Tu; that stretch reads TDFV. The interval 215–251 is disordered; that stretch reads QMGQKAPEPVAAAPQVEEKAPEPAAKDNPPAKGKKKK. A compositionally biased stretch (low complexity) spans 219-229; it reads KAPEPVAAAPQ. The span at 230–239 shows a compositional bias: basic and acidic residues; sequence VEEKAPEPAA.

This sequence belongs to the EF-Ts family.

It is found in the cytoplasm. Functionally, associates with the EF-Tu.GDP complex and induces the exchange of GDP to GTP. It remains bound to the aminoacyl-tRNA.EF-Tu.GTP complex up to the GTP hydrolysis stage on the ribosome. In Microcystis aeruginosa (strain NIES-843 / IAM M-2473), this protein is Elongation factor Ts.